Consider the following 564-residue polypeptide: Arginine--tRNA ligase (564 aa).

The 'HIGH' region motif lies at 124-134 (PNIAKDMHVGH).

Belongs to the class-I aminoacyl-tRNA synthetase family. Monomer.

Its subcellular location is the cytoplasm. The enzyme catalyses tRNA(Arg) + L-arginine + ATP = L-arginyl-tRNA(Arg) + AMP + diphosphate. This is Arginine--tRNA ligase from Chlamydia caviae (strain ATCC VR-813 / DSM 19441 / 03DC25 / GPIC) (Chlamydophila caviae).